The chain runs to 1456 residues: RNA replication protein (1456 aa).

The Alphavirus-like MT domain occupies 59-224 (NPYSIELHTH…HHEFSHLQWL (166 aa)). A disordered region spans residues 537 to 573 (MRAEGEAESNEMSGGMGAIPSNAELPSTSGARQELTL). Polar residues predominate over residues 560–573 (ELPSTSGARQELTL). The (+)RNA virus helicase ATP-binding domain maps to 695-862 (DVKNKRIGAI…YFSKYCRYYL (168 aa)). Residue 735–742 (GAGGSGKS) coordinates ATP. One can recognise a (+)RNA virus helicase C-terminal domain in the interval 863 to 997 (NATHRNKKDL…VVREQALKEY (135 aa)). The RdRp catalytic domain maps to 1236–1343 (RPSLANDYTA…DCVPEVKHSF (108 aa)).

Belongs to the potexvirus/carlavirus RNA replication protein family.

The catalysed reaction is RNA(n) + a ribonucleoside 5'-triphosphate = RNA(n+1) + diphosphate. It carries out the reaction ATP + H2O = ADP + phosphate + H(+). Functionally, RNA replication. The central part of this protein possibly functions as an ATP-binding helicase. The sequence is that of RNA replication protein from Potato virus X (PVX).